We begin with the raw amino-acid sequence, 464 residues long: C-terminal processing peptidase, chloroplastic (464 aa).

A chloroplast-targeting transit peptide spans 1-32 (MHSRTNCLQTSVRAPQPHFRPFTAVKTCRQRC). A thylakoid-targeting transit peptide spans 33-77 (STTAAAAKRDQAQEQQPWIQVGLGLAAAATAVAVGLGAAALPAQA). The 86-residue stretch at 149 to 234 (LAALRRGTAG…SQVEVVLHAP (86 aa)) folds into the PDZ domain. Residues S372 and K397 each act as charge relay system in the active site.

This sequence belongs to the peptidase S41A family. In terms of assembly, monomer.

The protein resides in the plastid. It is found in the chloroplast thylakoid lumen. The enzyme catalyses The enzyme shows specific recognition of a C-terminal tripeptide, Xaa-Yaa-Zaa, in which Xaa is preferably Ala or Leu, Yaa is preferably Ala or Tyr, and Zaa is preferably Ala, but then cleaves at a variable distance from the C-terminus. A typical cleavage is -Ala-Ala-|-Arg-Ala-Ala-Lys-Glu-Asn-Tyr-Ala-Leu-Ala-Ala.. Not inhibited by antipain, 4-amidinophenylmethanesulfonyl fluoride, aprotinin, chymostatin, 3,4-dichloroisocoumarin, diisopropyl fluorophosphate, E64, EDTA, EGTA, iodoacetamide, leupeptin, pepstatin, o-phenanthroline, N-ethylmaleimide, phosphoramidon or phenylmethylsulfonyl fluoride. Protease involved in the C-terminal processing of the chloroplastic D1 protein of photosystem II. This proteolytic processing is necessary to allow the light-driven assembly of the tetranuclear manganese cluster, which is responsible for photosynthetic water oxidation. In Tetradesmus obliquus (Green alga), this protein is C-terminal processing peptidase, chloroplastic (ctpA).